Here is a 148-residue protein sequence, read N- to C-terminus: Ubiquitin-conjugating enzyme E2 10 (148 aa).

Positions 1–147 constitute a UBC core domain; that stretch reads MASKRILKEL…ARSWTQKYAM (147 aa). The active-site Glycyl thioester intermediate is the C85.

The protein belongs to the ubiquitin-conjugating enzyme family. As to quaternary structure, interacts with CHIP and the E3 ubiquitin ligase BB. Associates with the E3 ubiquitin ligase JMJ24. As to expression, ubiquitously expressed with the highest levels in rosette leaves, roots and petals.

The enzyme catalyses S-ubiquitinyl-[E1 ubiquitin-activating enzyme]-L-cysteine + [E2 ubiquitin-conjugating enzyme]-L-cysteine = [E1 ubiquitin-activating enzyme]-L-cysteine + S-ubiquitinyl-[E2 ubiquitin-conjugating enzyme]-L-cysteine.. Its pathway is protein modification; protein ubiquitination. Its function is as follows. Accepts the ubiquitin from the E1 complex and catalyzes its covalent attachment to other proteins. Mediates the selective degradation of short-lived and abnormal proteins. The chain is Ubiquitin-conjugating enzyme E2 10 from Arabidopsis thaliana (Mouse-ear cress).